The following is a 732-amino-acid chain: Acetophenone carboxylase gamma subunit (732 aa).

It belongs to the HyuA family. As to quaternary structure, acetophenone carboxylase consists of five subunits; a heterooctameric subcomplex of two alpha (Apc1), two beta (Apc2), two gamma (Apc3) and two delta (Apc4) subunits assembles with the epsilon (Apc5) subunit in an unknown stoichiometry. Mg(2+) serves as cofactor. Requires Mn(2+) as cofactor.

The protein localises to the cytoplasm. It catalyses the reaction acetophenone + hydrogencarbonate + 2 ATP + H2O = 3-oxo-3-phenylpropanoate + 2 ADP + 2 phosphate + 2 H(+). With respect to regulation, inhibited by zinc ions, carbamoylphosphate and beta,gamma-imido-ATP. Its function is as follows. Catalyzes the carboxylation of acetophenone to form 3-oxo-3-phenylpropanoate (benzoylacetate) in the anaerobic catabolism of ethylbenzene. Also carboxylates propiophenone at the same rate and 4-acetyl-pyridine at lower rates. This Aromatoleum aromaticum (strain DSM 19018 / LMG 30748 / EbN1) (Azoarcus sp. (strain EbN1)) protein is Acetophenone carboxylase gamma subunit (apc3).